A 120-amino-acid polypeptide reads, in one-letter code: Large ribosomal subunit protein uL22 (120 aa).

The protein belongs to the universal ribosomal protein uL22 family. Part of the 50S ribosomal subunit.

Functionally, this protein binds specifically to 23S rRNA; its binding is stimulated by other ribosomal proteins, e.g. L4, L17, and L20. It is important during the early stages of 50S assembly. It makes multiple contacts with different domains of the 23S rRNA in the assembled 50S subunit and ribosome. The globular domain of the protein is located near the polypeptide exit tunnel on the outside of the subunit, while an extended beta-hairpin is found that lines the wall of the exit tunnel in the center of the 70S ribosome. This is Large ribosomal subunit protein uL22 from Rippkaea orientalis (strain PCC 8801 / RF-1) (Cyanothece sp. (strain PCC 8801)).